The primary structure comprises 340 residues: MTAPLVVLGNPLLDFQADVTAEYLAKYSLKENDAILVDAKSGDAKMAIFDELLQMPETKLVAGGAAQNTARGAAYVLGAGQVVYFGSVGKDKFSERLLNENEKAGVKSMYQVQNDIGTGKCAALITGHNRSLVTDLGAANFFTPDHLDKHWDLVEAAKLFYIGGFHLTVSPDAIVKLGQHAKENSKPFVLNFSAPFIPHVFKDALARVLPYATVIIANESEAEAFCDAFQLDCANTDLEAIAQRIVKDSPVEKTVIFTHGVEPTVVVSSKGTSTYPVKPLDSSKIVDTNGAGDAFAGGFMAGLTKGEDLETSIDMGQWLAALSIQEVGPSYPSEKISYSK.

Residue Asp293 is part of the active site.

It belongs to the carbohydrate kinase PfkB family. The cofactor is Mg(2+).

The catalysed reaction is adenosine + ATP = AMP + ADP + H(+). The protein operates within purine metabolism; AMP biosynthesis via salvage pathway; AMP from adenosine: step 1/1. Its function is as follows. ATP dependent phosphorylation of adenosine and other related nucleoside analogs to monophosphate derivatives. ADO1 does not play a major role in adenine utilization in yeast. Its physiological role could primarily be to recycle adenosine produced by the methyl cycle. This chain is Adenosine kinase, found in Saccharomyces cerevisiae (strain ATCC 204508 / S288c) (Baker's yeast).